The primary structure comprises 272 residues: MKQYLRSSVLVIGGAEDKVHGKEILQRFWHCAGGTDAIIAIIPSASREPTIIGDRYVSIFSEMGAKDLKVLDVRDRIQGEDKDYQEYVEKCTAIFMTGGDQLRLCGLLADTPLMERIRQRVKLGEVTLGGTSAGAAVMGHHMIAGGSSGESPNRALVDMAMGLGIIPEVIVDQHFHNRNRMARLLSALSNHPERLGIGIDEDTCAVFQKDEYIEVIGKGTVTIVDGQAMSYTNHGKVAAEDPLALHNLRLHILGHGDRYNRKTHQPMAGIVE.

Residues S132, E150, and H174 each act as charge relay system in the active site.

It belongs to the peptidase S51 family.

It carries out the reaction [L-4-(L-arginin-2-N-yl)aspartate](n) + H2O = [L-4-(L-arginin-2-N-yl)aspartate](n-1) + L-4-(L-arginin-2-N-yl)aspartate. In terms of biological role, exopeptidase that catalyzes the hydrolytic cleavage of multi-L-arginyl-poly-L-aspartic acid (cyanophycin; a water-insoluble reserve polymer) into aspartate-arginine dipeptides. The polypeptide is Cyanophycinase (cphB) (Geminocystis herdmanii (strain PCC 6308) (Synechocystis sp. (strain PCC 6308))).